The following is a 102-amino-acid chain: Small ribosomal subunit protein uS10 (102 aa).

This sequence belongs to the universal ribosomal protein uS10 family. Part of the 30S ribosomal subunit.

Its function is as follows. Involved in the binding of tRNA to the ribosomes. The protein is Small ribosomal subunit protein uS10 of Thermoanaerobacter pseudethanolicus (strain ATCC 33223 / 39E) (Clostridium thermohydrosulfuricum).